A 930-amino-acid chain; its full sequence is uncharacterized protein (930 aa).

Residues 434-441 carry the Nuclear localization signal motif; sequence IRRGISRK.

Its subcellular location is the nucleus. This is an uncharacterized protein from Chaetomium thermophilum (strain DSM 1495 / CBS 144.50 / IMI 039719) (Thermochaetoides thermophila).